A 142-amino-acid chain; its full sequence is Large ribosomal subunit protein uL11 (142 aa).

This sequence belongs to the universal ribosomal protein uL11 family. Part of the ribosomal stalk of the 50S ribosomal subunit. Interacts with L10 and the large rRNA to form the base of the stalk. L10 forms an elongated spine to which L12 dimers bind in a sequential fashion forming a multimeric L10(L12)X complex. One or more lysine residues are methylated.

Forms part of the ribosomal stalk which helps the ribosome interact with GTP-bound translation factors. The chain is Large ribosomal subunit protein uL11 from Liberibacter asiaticus (Citrus greening disease).